A 351-amino-acid polypeptide reads, in one-letter code: Mediator of RNA polymerase II transcription subunit 18 (351 aa).

Positions 153 to 231 (GNGDPIDIDT…LPQSLSNGVS (79 aa)) are disordered. Residues 163-204 (NNDKQGDNNTDKPKQEHDGKLPEAIDEDIIKNGDEKKTTHDD) show a composition bias toward basic and acidic residues. The segment covering 205-216 (NDSDIMEIDEPN) has biased composition (acidic residues). The segment covering 217–231 (PETQTLPQSLSNGVS) has biased composition (polar residues).

It belongs to the Mediator complex subunit 18 family. In terms of assembly, component of the Mediator complex.

The protein localises to the nucleus. Its function is as follows. Component of the Mediator complex, a coactivator involved in the regulated transcription of nearly all RNA polymerase II-dependent genes. Mediator functions as a bridge to convey information from gene-specific regulatory proteins to the basal RNA polymerase II transcription machinery. Mediator is recruited to promoters by direct interactions with regulatory proteins and serves as a scaffold for the assembly of a functional preinitiation complex with RNA polymerase II and the general transcription factors. The chain is Mediator of RNA polymerase II transcription subunit 18 (SRB5) from Candida albicans (strain SC5314 / ATCC MYA-2876) (Yeast).